We begin with the raw amino-acid sequence, 382 residues long: UDP-4-amino-4-deoxy-L-arabinose--oxoglutarate aminotransferase (382 aa).

K183 carries the post-translational modification N6-(pyridoxal phosphate)lysine.

It belongs to the DegT/DnrJ/EryC1 family. ArnB subfamily. Homodimer. Pyridoxal 5'-phosphate is required as a cofactor.

It carries out the reaction UDP-4-amino-4-deoxy-beta-L-arabinose + 2-oxoglutarate = UDP-beta-L-threo-pentopyranos-4-ulose + L-glutamate. The protein operates within nucleotide-sugar biosynthesis; UDP-4-deoxy-4-formamido-beta-L-arabinose biosynthesis; UDP-4-deoxy-4-formamido-beta-L-arabinose from UDP-alpha-D-glucuronate: step 2/3. It participates in bacterial outer membrane biogenesis; lipopolysaccharide biosynthesis. Catalyzes the conversion of UDP-4-keto-arabinose (UDP-Ara4O) to UDP-4-amino-4-deoxy-L-arabinose (UDP-L-Ara4N). The modified arabinose is attached to lipid A and is required for resistance to polymyxin and cationic antimicrobial peptides. The protein is UDP-4-amino-4-deoxy-L-arabinose--oxoglutarate aminotransferase of Pseudomonas aeruginosa (strain UCBPP-PA14).